The following is a 324-amino-acid chain: Probable UDP-sugar transporter protein SLC35A4 (324 aa).

At 1–18 the chain is on the cytoplasmic side; the sequence is MSVEDGGVPGLARPRQAR. Residues 19–39 traverse the membrane as a helical segment; sequence WTLLLFLSTAMYGAHAPFLAL. Over 40–52 the chain is Lumenal; it reads CHVDGRVPFRPSS. Residues 53–73 traverse the membrane as a helical segment; it reads AVLLTELTKLLLCAFSLLVGW. The Cytoplasmic segment spans residues 74–85; it reads QTWPQGTPPWRQ. A helical membrane pass occupies residues 86–106; it reads AVPFALSALLYGANNNLVIYL. The Lumenal portion of the chain corresponds to 107–142; it reads QRYMDPSTYQVLSNLKIGSTALLYCLCLGHRLSARQ. The chain crosses the membrane as a helical span at residues 143–163; that stretch reads GLALLLLMAAGACYASGGFQE. Residues 164-180 are Cytoplasmic-facing; that stretch reads PVNTLPGPASAAGAHPM. Residues 181–201 traverse the membrane as a helical segment; sequence PLHITPLGLLLLILYCLISGL. Residues 202–214 are Lumenal-facing; it reads SSVYTELIMKRQR. The chain crosses the membrane as a helical span at residues 215-235; it reads LPLALQNLFLYTFGVILNFGL. Topologically, residues 236–248 are cytoplasmic; the sequence is YAGSGPGPGFLEG. Residues 249–271 form a helical membrane-spanning segment; it reads FSGWAVLVVLNQAVNGLLMSAVM. Residues 272 to 279 are Lumenal-facing; sequence KHGSSITR. Residues 280-300 form a helical membrane-spanning segment; the sequence is LFIVSCSLVVNAVLSAVLLQL. At 301-324 the chain is on the cytoplasmic side; that stretch reads QLTAIFFLAALLIGLAVCLYYGSP.

The protein belongs to the nucleotide-sugar transporter family. SLC35A subfamily. Found in a complex with SLC35A2 and SLC35A3.

It is found in the golgi apparatus membrane. The enzyme catalyses CDP-L-ribitol(in) + CDP(out) = CDP-L-ribitol(out) + CDP(in). Mediates the transport of CDP-ribitol. Does not exhibit CMP-sialic acid, UDP-galactose and UDP-N-acetylglucosamine transport activity. The sequence is that of Probable UDP-sugar transporter protein SLC35A4 from Mus musculus (Mouse).